The following is a 51-amino-acid chain: Lantibiotic flavucin (51 aa).

A propeptide spanning residues 1 to 20 (MSDFTLDFAEGDAADTVSPQ) is cleaved from the precursor. The segment at residues 23–27 (SKSLC) is a cross-link (lanthionine (Ser-Cys)). Cross-links (beta-methyllanthionine (Thr-Cys)) lie at residues 28-31 (TPGC), 33-38 (TGWMMC), and 42-45 (TKGC).

This sequence belongs to the type A lantibiotic family. In terms of processing, maturation of lantibiotics involves the enzymatic conversion of Thr, and Ser into dehydrated AA and the formation of thioether bonds with cysteine. This is followed by membrane translocation and cleavage of the modified precursor.

With respect to regulation, antimicrobial activity depends on the dehydration degree and integrity of flavucin. Functionally, lanthionine-containing peptide antibiotic (lantibiotic) active on certain Gram-positive bacteria. The bactericidal activity of lantibiotics is based on depolarization of energized bacterial cytoplasmic membranes, initiated by the formation of aqueous transmembrane pores. Flavucin has high antimicrobial activity against several pathogenic bacteria such as S.aureus, E.faecalis, E.faecium and L.monocytogenes. Is also active against the Gram-negative P.aeruginosa. This chain is Lantibiotic flavucin, found in Corynebacterium lipophiloflavum (strain ATCC 700352 / DSM 44291 / CCUG 37336 / JCM 10383 / DMMZ 1944).